We begin with the raw amino-acid sequence, 215 residues long: MRLVFLGAPGAGKGTQAKRLVEKYGIPQISTGDLLRAAVAAGTPLGKEAKAYMDRGELVPDKVVLGMVKERLSQNDCKKGFILDGFPRNVAQAEALDKMLSEMNMPLDLALNLDVPFDDLMKRLTGRRTCKSCGQMYNVYYSPSKVEGKCDKCGGELFQRDDDKEETIRKRLEVYRAQTEPLIDYYSKKGILKSVSGTGSIDEIFNSICAILEKK.

An ATP-binding site is contributed by 10 to 15 (GAGKGT). The tract at residues 30-59 (STGDLLRAAVAAGTPLGKEAKAYMDRGELV) is NMP. AMP-binding positions include Thr-31, Arg-36, 57-59 (ELV), 85-88 (GFPR), and Gln-92. Residues 126–163 (GRRTCKSCGQMYNVYYSPSKVEGKCDKCGGELFQRDDD) are LID. Arg-127 provides a ligand contact to ATP. Positions 130, 133, 150, and 153 each coordinate Zn(2+). 2 residues coordinate AMP: Arg-160 and Arg-171. Gly-199 is a binding site for ATP.

This sequence belongs to the adenylate kinase family. As to quaternary structure, monomer.

The protein localises to the cytoplasm. The catalysed reaction is AMP + ATP = 2 ADP. It functions in the pathway purine metabolism; AMP biosynthesis via salvage pathway; AMP from ADP: step 1/1. Functionally, catalyzes the reversible transfer of the terminal phosphate group between ATP and AMP. Plays an important role in cellular energy homeostasis and in adenine nucleotide metabolism. In Thermodesulfovibrio yellowstonii (strain ATCC 51303 / DSM 11347 / YP87), this protein is Adenylate kinase.